The following is a 536-amino-acid chain: Phosphoenolpyruvate carboxykinase (ATP) (536 aa).

Residues R61, Y195, and K201 each contribute to the substrate site. ATP contacts are provided by residues K201, H220, and G236–T244. Mn(2+)-binding residues include K201 and H220. D257 is a Mn(2+) binding site. 3 residues coordinate ATP: E285, R323, and T448. R323 is a binding site for substrate.

It belongs to the phosphoenolpyruvate carboxykinase (ATP) family. Mn(2+) serves as cofactor.

The protein localises to the cytoplasm. The enzyme catalyses oxaloacetate + ATP = phosphoenolpyruvate + ADP + CO2. It participates in carbohydrate biosynthesis; gluconeogenesis. Involved in the gluconeogenesis. Catalyzes the conversion of oxaloacetate (OAA) to phosphoenolpyruvate (PEP) through direct phosphoryl transfer between the nucleoside triphosphate and OAA. The protein is Phosphoenolpyruvate carboxykinase (ATP) of Methylobacterium nodulans (strain LMG 21967 / CNCM I-2342 / ORS 2060).